Consider the following 443-residue polypeptide: Glucose-6-phosphate isomerase (443 aa).

The active-site Proton donor is the E285. Active-site residues include H306 and K420.

Belongs to the GPI family.

Its subcellular location is the cytoplasm. The catalysed reaction is alpha-D-glucose 6-phosphate = beta-D-fructose 6-phosphate. The protein operates within carbohydrate biosynthesis; gluconeogenesis. Its pathway is carbohydrate degradation; glycolysis; D-glyceraldehyde 3-phosphate and glycerone phosphate from D-glucose: step 2/4. Functionally, catalyzes the reversible isomerization of glucose-6-phosphate to fructose-6-phosphate. In Staphylococcus aureus (strain Mu3 / ATCC 700698), this protein is Glucose-6-phosphate isomerase.